Consider the following 116-residue polypeptide: Translation initiation factor 1A (116 aa).

The interval 1–25 (MRCLSKKHQKQGDEHGGEIPLPNPD) is disordered. Positions 17-91 (GEIPLPNPDE…EKGEVVYKYG (75 aa)) constitute an S1-like domain.

It belongs to the eIF-1A family.

Seems to be required for maximal rate of protein biosynthesis. Enhances ribosome dissociation into subunits and stabilizes the binding of the initiator Met-tRNA(I) to 40 S ribosomal subunits. The protein is Translation initiation factor 1A (eIF1A) of Desulfurococcus amylolyticus (strain DSM 18924 / JCM 16383 / VKM B-2413 / 1221n) (Desulfurococcus kamchatkensis).